The chain runs to 163 residues: MKFFAVLALCIVGAIAHPLTSDEAALVKSSWAQVKHNEVDILYTVFKAYPDIQARFPQFAGKDLDSIKTSGQFATHATRIVSFFSELIALSGSESNLSAIYGLISKMGTDHKNRGITQTQFNEFRTALVSYISSNVSWGDNVAAAWTHALDNVYTAVFQIVTA.

A signal peptide spans 1 to 16; it reads MKFFAVLALCIVGAIA. The 145-residue stretch at 18 to 162 folds into the Globin domain; sequence PLTSDEAALV…VYTAVFQIVT (145 aa). His76 and His111 together coordinate heme b.

It belongs to the globin family.

The sequence is that of Globin CTT-Z (CTT-Z) from Chironomus thummi piger (Midge).